The primary structure comprises 308 residues: tRNA dimethylallyltransferase (308 aa).

Position 11–18 (11–18 (GSTATGKS)) interacts with ATP. Substrate is bound at residue 13-18 (TATGKS). The interval 36 to 39 (DSVQ) is interaction with substrate tRNA.

It belongs to the IPP transferase family. Monomer. It depends on Mg(2+) as a cofactor.

The enzyme catalyses adenosine(37) in tRNA + dimethylallyl diphosphate = N(6)-dimethylallyladenosine(37) in tRNA + diphosphate. Catalyzes the transfer of a dimethylallyl group onto the adenine at position 37 in tRNAs that read codons beginning with uridine, leading to the formation of N6-(dimethylallyl)adenosine (i(6)A). The chain is tRNA dimethylallyltransferase from Bdellovibrio bacteriovorus (strain ATCC 15356 / DSM 50701 / NCIMB 9529 / HD100).